The sequence spans 227 residues: 2-C-methyl-D-erythritol 4-phosphate cytidylyltransferase (227 aa).

Belongs to the IspD/TarI cytidylyltransferase family. IspD subfamily.

It carries out the reaction 2-C-methyl-D-erythritol 4-phosphate + CTP + H(+) = 4-CDP-2-C-methyl-D-erythritol + diphosphate. The protein operates within isoprenoid biosynthesis; isopentenyl diphosphate biosynthesis via DXP pathway; isopentenyl diphosphate from 1-deoxy-D-xylulose 5-phosphate: step 2/6. In terms of biological role, catalyzes the formation of 4-diphosphocytidyl-2-C-methyl-D-erythritol from CTP and 2-C-methyl-D-erythritol 4-phosphate (MEP). The polypeptide is 2-C-methyl-D-erythritol 4-phosphate cytidylyltransferase (Nostoc punctiforme (strain ATCC 29133 / PCC 73102)).